The primary structure comprises 59 residues: Large ribosomal subunit protein uL30 (59 aa).

The protein belongs to the universal ribosomal protein uL30 family. In terms of assembly, part of the 50S ribosomal subunit.

The chain is Large ribosomal subunit protein uL30 from Clostridium beijerinckii (strain ATCC 51743 / NCIMB 8052) (Clostridium acetobutylicum).